Consider the following 260-residue polypeptide: Indole-3-glycerol phosphate synthase (260 aa).

The protein belongs to the TrpC family.

It catalyses the reaction 1-(2-carboxyphenylamino)-1-deoxy-D-ribulose 5-phosphate + H(+) = (1S,2R)-1-C-(indol-3-yl)glycerol 3-phosphate + CO2 + H2O. The protein operates within amino-acid biosynthesis; L-tryptophan biosynthesis; L-tryptophan from chorismate: step 4/5. This is Indole-3-glycerol phosphate synthase from Staphylococcus aureus (strain bovine RF122 / ET3-1).